Consider the following 396-residue polypeptide: Probable sugar efflux transporter (396 aa).

Helical transmembrane passes span 15-35, 50-70, 81-101, 103-123, 136-156, 170-190, 209-229, 246-266, 275-295, 299-319, 333-353, and 364-384; these read VVTLAVAAFIFNTTEFVPVGL, VGIMLTIYAWVVALMSLPFML, LICLFVVFIASHVLSFLSWSF, VLVISRIGVAFAHAIFWSITA, AQALSLIATGTALAMVLGLPL, FFAIGIGALITLLCLIKLLPL, PALMSIYLLTVVVVTAHYTAY, FATALLLLLGGAGIIGSVIFG, TLVSTAIALLLVCLALLLPAA, IHLGVLSIFWGIAMMIIGLGM, VAMALFSGIFNIGIGAGALVG, and MIGYVGAVPAFAALIWSIIIF.

This sequence belongs to the major facilitator superfamily. SotB (TC 2.A.1.2) family.

The protein resides in the cell inner membrane. Involved in the efflux of sugars. The physiological role may be the reduction of the intracellular concentration of toxic sugars or sugar metabolites. The polypeptide is Probable sugar efflux transporter (Escherichia coli (strain SMS-3-5 / SECEC)).